The chain runs to 612 residues: Phragmoplastin DRP1D (612 aa).

Methionine 1 carries the N-acetylmethionine modification. Residues 32 to 301 (WEALPSVAVV…LESVIRSRIP (270 aa)) enclose the Dynamin-type G domain. Residues 42–49 (GGQSSGKS) are G1 motif. 45–50 (SSGKSS) serves as a coordination point for GTP. The tract at residues 68-70 (VTR) is G2 motif. Positions 143–146 (DLPG) are G3 motif. The segment at 212-215 (TKLD) is G4 motif. Residues 213–218 (KLDLMD) and 243–246 (NRSQ) each bind GTP. Residues 242–245 (VNRS) are G5 motif. Residues 520-612 (FRKIASNVAA…DEIDAAVWVR (93 aa)) enclose the GED domain.

The protein belongs to the TRAFAC class dynamin-like GTPase superfamily. Dynamin/Fzo/YdjA family. In terms of assembly, forms homodimer and may homooligomerize and heterooligomerize to form the phragmoplastin complex. Binds to PHIP1.

The protein resides in the cytoplasm. It is found in the cytoskeleton. The enzyme catalyses GTP + H2O = GDP + phosphate + H(+). Its function is as follows. Putative microtubule-associated force-producing protein. Has a GTPase activity. The protein is Phragmoplastin DRP1D of Arabidopsis thaliana (Mouse-ear cress).